The primary structure comprises 261 residues: 4-phosphopantoate--beta-alanine ligase (261 aa).

ATP contacts are provided by residues R17, R39, 181 to 183, 187 to 188, and 199 to 200; these read DLN, RS, and NI.

Belongs to the archaeal phosphopantothenate synthetase family. In terms of assembly, homodimer.

It catalyses the reaction (R)-4-phosphopantoate + beta-alanine + ATP = (R)-4'-phosphopantothenate + AMP + diphosphate + H(+). Its pathway is cofactor biosynthesis; coenzyme A biosynthesis. Activity is not affected by 4'-phosphopantothenate or CoA/acetyl-CoA. Functionally, catalyzes the condensation of (R)-4-phosphopantoate and beta-alanine to 4'-phosphopantothenate in the CoA biosynthesis pathway. Cannot use (R)-pantoate as substrate and thus does not display pantothenate synthetase (PS) activity. Displays strict specificity for its natural substrates, 4-phosphopantoate, ATP and beta-alanine. This chain is 4-phosphopantoate--beta-alanine ligase, found in Thermococcus kodakarensis (strain ATCC BAA-918 / JCM 12380 / KOD1) (Pyrococcus kodakaraensis (strain KOD1)).